Reading from the N-terminus, the 306-residue chain is UDP-N-acetylenolpyruvoylglucosamine reductase (306 aa).

Residues 28–194 (KIGNISKLFL…LKTELNLKKE (167 aa)) form the FAD-binding PCMH-type domain. Ser-223 functions as the Proton donor in the catalytic mechanism. The active site involves Glu-295.

Belongs to the MurB family. It depends on FAD as a cofactor.

The protein localises to the cytoplasm. The enzyme catalyses UDP-N-acetyl-alpha-D-muramate + NADP(+) = UDP-N-acetyl-3-O-(1-carboxyvinyl)-alpha-D-glucosamine + NADPH + H(+). Its pathway is cell wall biogenesis; peptidoglycan biosynthesis. In terms of biological role, cell wall formation. This is UDP-N-acetylenolpyruvoylglucosamine reductase from Borrelia garinii subsp. bavariensis (strain ATCC BAA-2496 / DSM 23469 / PBi) (Borreliella bavariensis).